Here is an 89-residue protein sequence, read N- to C-terminus: Small ribosomal subunit protein bS16 (89 aa).

This sequence belongs to the bacterial ribosomal protein bS16 family.

In Desulforamulus reducens (strain ATCC BAA-1160 / DSM 100696 / MI-1) (Desulfotomaculum reducens), this protein is Small ribosomal subunit protein bS16.